A 145-amino-acid polypeptide reads, in one-letter code: MKNTFRISLKAGEKIYVNGAVIKVDRKVSLEFLNDVQFLLQQHVLQPEDANTPLRQLYFIVQVMLMGPEGADKTRPLLKDMLDNLLATFRNERILAGLKHVDSLVCEGQIYEALKAIRALYPIEEEILSAGRQQEQAIFAKAVGE.

It belongs to the FlbT family.

Has a post-transcriptional repressor function in flagellum biogenesis. Associates with the 5'-UTR of fljK mRNA and promotes its degradation. This is Probable flagellum biosynthesis repressor protein FlbT from Chelativorans sp. (strain BNC1).